Here is a 117-residue protein sequence, read N- to C-terminus: Large ribosomal subunit protein uL18 (117 aa).

The protein belongs to the universal ribosomal protein uL18 family. As to quaternary structure, part of the 50S ribosomal subunit; part of the 5S rRNA/L5/L18/L25 subcomplex. Contacts the 5S and 23S rRNAs.

Functionally, this is one of the proteins that bind and probably mediate the attachment of the 5S RNA into the large ribosomal subunit, where it forms part of the central protuberance. In Polynucleobacter asymbioticus (strain DSM 18221 / CIP 109841 / QLW-P1DMWA-1) (Polynucleobacter necessarius subsp. asymbioticus), this protein is Large ribosomal subunit protein uL18.